The following is a 436-amino-acid chain: 3-ketoacyl-CoA thiolase (436 aa).

Catalysis depends on cysteine 99, which acts as the Acyl-thioester intermediate. Active-site proton acceptor residues include histidine 392 and cysteine 422.

This sequence belongs to the thiolase-like superfamily. Thiolase family. In terms of assembly, heterotetramer of two alpha chains (FadJ) and two beta chains (FadI).

The protein resides in the cytoplasm. The catalysed reaction is an acyl-CoA + acetyl-CoA = a 3-oxoacyl-CoA + CoA. It participates in lipid metabolism; fatty acid beta-oxidation. In terms of biological role, catalyzes the final step of fatty acid oxidation in which acetyl-CoA is released and the CoA ester of a fatty acid two carbons shorter is formed. This Salmonella typhimurium (strain LT2 / SGSC1412 / ATCC 700720) protein is 3-ketoacyl-CoA thiolase.